We begin with the raw amino-acid sequence, 527 residues long: Amine oxidase [flavin-containing] A (527 aa).

At Met1 the chain carries N-acetylmethionine. Topologically, residues 1–497 (MERQEKANNA…RTFWERNLPS (497 aa)) are cytoplasmic. Ser383 is subject to Phosphoserine. Cys406 bears the S-8alpha-FAD cysteine mark. Residues 498-518 (VTGLLKIIGFSTSVTALWLAV) traverse the membrane as a helical; Anchor for type IV membrane protein segment. Over 519 to 527 (YKFRLLTRS) the chain is Mitochondrial intermembrane. Residues 520 to 522 (KFR) form an interaction with membrane phospholipid headgroups region.

Belongs to the flavin monoamine oxidase family. Monomer, homo- or heterodimer (containing two subunits of similar size). Each subunit contains a covalently bound flavin. Enzymatically active as monomer. Requires FAD as cofactor.

It localises to the mitochondrion outer membrane. The catalysed reaction is a secondary aliphatic amine + O2 + H2O = a primary amine + an aldehyde + H2O2. It catalyses the reaction a primary methyl amine + O2 + H2O = an aldehyde + H2O2 + NH4(+). The enzyme catalyses (R)-adrenaline + O2 + H2O = (R)-3,4-dihydroxymandelaldehyde + methylamine + H2O2. It carries out the reaction dopamine + O2 + H2O = 3,4-dihydroxyphenylacetaldehyde + H2O2 + NH4(+). The catalysed reaction is tyramine + O2 + H2O = (4-hydroxyphenyl)acetaldehyde + H2O2 + NH4(+). It catalyses the reaction (R)-noradrenaline + O2 + H2O = (R)-3,4-dihydroxymandelaldehyde + H2O2 + NH4(+). The enzyme catalyses serotonin + O2 + H2O = (5-hydroxyindol-3-yl)acetaldehyde + H2O2 + NH4(+). It carries out the reaction kynuramine + O2 + H2O = 3-(2-aminophenyl)-3-oxopropanal + H2O2 + NH4(+). The catalysed reaction is tryptamine + O2 + H2O = indole-3-acetaldehyde + H2O2 + NH4(+). It catalyses the reaction 2-phenylethylamine + O2 + H2O = 2-phenylacetaldehyde + H2O2 + NH4(+). In terms of biological role, catalyzes the oxidative deamination of primary and some secondary amine such as neurotransmitters, with concomitant reduction of oxygen to hydrogen peroxide and has important functions in the metabolism of neuroactive and vasoactive amines in the central nervous system and peripheral tissues. Preferentially oxidizes serotonin. Also catalyzes the oxidative deamination of kynuramine to 3-(2-aminophenyl)-3-oxopropanal that can spontaneously condense to 4-hydroxyquinoline. The sequence is that of Amine oxidase [flavin-containing] A from Sus scrofa (Pig).